We begin with the raw amino-acid sequence, 171 residues long: MEKRLQEAQLYKEEGNQRYREGKYRDAVSRYHRALLQLRGLDPSLPSPLPNLGPQGPALTPEQENILHTTQTDCYNNLAACLLQMEPVNYERVREYSQKVLERQPDNAKALYRAGVAFFHLQDYDQARHYLLAAVNRQPKDANVRRYLQLTQSELSSYHRKEKQLYLGMFG.

3 TPR repeats span residues Ala-8 to Leu-41, Thr-72 to Asn-107, and Ala-108 to Asp-141.

Belongs to the TTC9 family.

This is Tetratricopeptide repeat protein 9C (TTC9C) from Homo sapiens (Human).